The sequence spans 305 residues: Homoserine O-acetyltransferase (305 aa).

Cys-142 functions as the Acyl-thioester intermediate in the catalytic mechanism. Residues Lys-163 and Ser-192 each contribute to the substrate site. His-235 serves as the catalytic Proton acceptor. Glu-237 is a catalytic residue. A substrate-binding site is contributed by Arg-249.

This sequence belongs to the MetA family.

It is found in the cytoplasm. It catalyses the reaction L-homoserine + acetyl-CoA = O-acetyl-L-homoserine + CoA. It functions in the pathway amino-acid biosynthesis; L-methionine biosynthesis via de novo pathway; O-acetyl-L-homoserine from L-homoserine: step 1/1. Transfers an acetyl group from acetyl-CoA to L-homoserine, forming acetyl-L-homoserine. This Cereibacter sphaeroides (strain ATCC 17025 / ATH 2.4.3) (Rhodobacter sphaeroides) protein is Homoserine O-acetyltransferase.